The primary structure comprises 425 residues: MKKLKETKISGISLPLYAFFVAVIIVVTLLGKLPLDMVGLTLLLVTLGHLLYFIGEKFPIMNSYLGGGSVFTLIGATLLSFFHIVPSNVIGAVSNFMGGKFGFLDFYIAALICGSILGMNRNLLVKASKKFIPIALITMVIGFFSVGLVGMLIGNGFADSVMYVSMPMMSGGMGAGITPLSQIYAAGLAHGNQAAIFSQLAPAVTFGNILAIIGALSIAKVFNKSKYNGHGTLVAATKEELAKPKIKLDAQQIGTGMLFAFALLMAGDILNKFFPNIHQYAFMIIIVFILKATNTVPKDLEESVVMFNQVIMTNLTHAVLAGIGLALIDLNTLASAFTWQFVVLCLTSVVVMGLASWFLARLFGLYPVETAIGAGMINNSMGGTGNIAVLSASDRMEMIAFAQMANRLCGAIVLIFGGILIRFFY.

Helical transmembrane passes span 11–31 (GISL…TLLG), 35–55 (LDMV…YFIG), 65–85 (LGGG…FHIV), 96–116 (FMGG…CGSI), 134–154 (IALI…MLIG), 196–216 (IFSQ…IGAL), 246–266 (IKLD…LLMA), 269–289 (ILNK…IVFI), 310–330 (VIMT…LIDL), 339–359 (WQFV…SWFL), and 401–421 (FAQM…GILI).

The protein belongs to the 2-hydroxycarboxylate transporter (2-HCT) (TC 2.A.24) family.

It is found in the cell membrane. It catalyses the reaction (S)-lactate(in) + (S)-malate(out) = (S)-lactate(out) + (S)-malate(in). It carries out the reaction (R)-lactate(in) + (S)-malate(out) = (R)-lactate(out) + (S)-malate(in). The catalysed reaction is glycolate(in) + (S)-malate(out) = glycolate(out) + (S)-malate(in). Secondary transporter involved in malolactic fermentation. Catalyzes the uptake of divalent malate into the cell coupled to the exit of monovalent lactate, a product of malate degradation (precursor/product exchange). The malate/lactate exchange is electrogenic and results in the generation of a membrane potential. Is highly selective for the S-enantiomer of malate. In the absence of lactate, MleP can also catalyze the proton-dependent transport of malate. In vitro, transports a range of substrates that contain the 2-hydroxycarboxylate motif, HO-CR(2)-COO(-), with a preference for malate, lactate and glycolate. Modification of the OH or the COO(-) groups of the 2-hydroxycarboxylate motif drastically reduces the affinity of the transporter for the substrates, indicating their relevance in substrate recognition. Significant activity is also observed with some 2-oxocarboxylates. Transports only poorly citromalate. Citrate binds to MleP but is not translocated. The chain is Malate transporter MleP from Lactococcus lactis subsp. lactis (strain IL1403) (Streptococcus lactis).